The sequence spans 297 residues: Acetyl-coenzyme A carboxylase carboxyl transferase subunit beta (297 aa).

Residues 27–296 (LWHKCPACEA…PEQAREAAAV (270 aa)) form the CoA carboxyltransferase N-terminal domain. Zn(2+)-binding residues include C31, C34, C50, and C53. Residues 31–53 (CPACEAVLYRPELEKTLDVCPKC) form a C4-type zinc finger.

Belongs to the AccD/PCCB family. Acetyl-CoA carboxylase is a heterohexamer composed of biotin carboxyl carrier protein (AccB), biotin carboxylase (AccC) and two subunits each of ACCase subunit alpha (AccA) and ACCase subunit beta (AccD). Zn(2+) serves as cofactor.

Its subcellular location is the cytoplasm. It carries out the reaction N(6)-carboxybiotinyl-L-lysyl-[protein] + acetyl-CoA = N(6)-biotinyl-L-lysyl-[protein] + malonyl-CoA. Its pathway is lipid metabolism; malonyl-CoA biosynthesis; malonyl-CoA from acetyl-CoA: step 1/1. Its function is as follows. Component of the acetyl coenzyme A carboxylase (ACC) complex. Biotin carboxylase (BC) catalyzes the carboxylation of biotin on its carrier protein (BCCP) and then the CO(2) group is transferred by the transcarboxylase to acetyl-CoA to form malonyl-CoA. In Pseudomonas putida (strain W619), this protein is Acetyl-coenzyme A carboxylase carboxyl transferase subunit beta.